Here is a 259-residue protein sequence, read N- to C-terminus: 5'-nucleotidase SurE (259 aa).

The a divalent metal cation site is built by aspartate 8, aspartate 9, serine 40, and asparagine 92.

The protein belongs to the SurE nucleotidase family. A divalent metal cation serves as cofactor.

It localises to the cytoplasm. The enzyme catalyses a ribonucleoside 5'-phosphate + H2O = a ribonucleoside + phosphate. Nucleotidase that shows phosphatase activity on nucleoside 5'-monophosphates. This Xanthomonas campestris pv. campestris (strain 8004) protein is 5'-nucleotidase SurE.